The chain runs to 95 residues: MSVDQETVKRVSHLARIAIHDDEIEPMTKELNVILGFVEQLNEVDVNGIEPLTSVMPMALRMREDSVTDGDKVADIVANAPVTEENFFLVSKVVE.

The protein belongs to the GatC family. Heterotrimer of A, B and C subunits.

The enzyme catalyses L-glutamyl-tRNA(Gln) + L-glutamine + ATP + H2O = L-glutaminyl-tRNA(Gln) + L-glutamate + ADP + phosphate + H(+). The catalysed reaction is L-aspartyl-tRNA(Asn) + L-glutamine + ATP + H2O = L-asparaginyl-tRNA(Asn) + L-glutamate + ADP + phosphate + 2 H(+). Functionally, allows the formation of correctly charged Asn-tRNA(Asn) or Gln-tRNA(Gln) through the transamidation of misacylated Asp-tRNA(Asn) or Glu-tRNA(Gln) in organisms which lack either or both of asparaginyl-tRNA or glutaminyl-tRNA synthetases. The reaction takes place in the presence of glutamine and ATP through an activated phospho-Asp-tRNA(Asn) or phospho-Glu-tRNA(Gln). This is Aspartyl/glutamyl-tRNA(Asn/Gln) amidotransferase subunit C from Bartonella quintana (strain Toulouse) (Rochalimaea quintana).